We begin with the raw amino-acid sequence, 246 residues long: Virulence plasmid protein pGP6-D (246 aa).

This sequence belongs to the UPF0137 (pGP6-D) family.

In Chlamydia psittaci (Chlamydophila psittaci), this protein is Virulence plasmid protein pGP6-D.